A 158-amino-acid chain; its full sequence is Transcriptional repressor NrdR (158 aa).

A zinc finger lies at 3 to 34 (CPSCQNTDSRVLESRAAEGGRSVRRRRECLNC). One can recognise an ATP-cone domain in the interval 49–139 (ITVIKRNGHR…VYRHFRSVSD (91 aa)).

The protein belongs to the NrdR family. Requires Zn(2+) as cofactor.

Functionally, negatively regulates transcription of bacterial ribonucleotide reductase nrd genes and operons by binding to NrdR-boxes. This chain is Transcriptional repressor NrdR, found in Synechococcus sp. (strain CC9311).